The chain runs to 342 residues: 4-hydroxy-3-methylbut-2-enyl diphosphate reductase (342 aa).

Position 47 (cysteine 47) interacts with [4Fe-4S] cluster. Histidine 78 and histidine 111 together coordinate (2E)-4-hydroxy-3-methylbut-2-enyl diphosphate. Residues histidine 78 and histidine 111 each coordinate dimethylallyl diphosphate. 2 residues coordinate isopentenyl diphosphate: histidine 78 and histidine 111. Residue cysteine 133 participates in [4Fe-4S] cluster binding. Histidine 161 serves as a coordination point for (2E)-4-hydroxy-3-methylbut-2-enyl diphosphate. Histidine 161 serves as a coordination point for dimethylallyl diphosphate. Histidine 161 contacts isopentenyl diphosphate. Residue glutamate 163 is the Proton donor of the active site. A (2E)-4-hydroxy-3-methylbut-2-enyl diphosphate-binding site is contributed by threonine 201. Cysteine 231 provides a ligand contact to [4Fe-4S] cluster. Residues serine 259, serine 260, asparagine 261, and serine 303 each contribute to the (2E)-4-hydroxy-3-methylbut-2-enyl diphosphate site. Serine 259, serine 260, asparagine 261, and serine 303 together coordinate dimethylallyl diphosphate. Isopentenyl diphosphate-binding residues include serine 259, serine 260, asparagine 261, and serine 303.

This sequence belongs to the IspH family. [4Fe-4S] cluster serves as cofactor.

It catalyses the reaction isopentenyl diphosphate + 2 oxidized [2Fe-2S]-[ferredoxin] + H2O = (2E)-4-hydroxy-3-methylbut-2-enyl diphosphate + 2 reduced [2Fe-2S]-[ferredoxin] + 2 H(+). The catalysed reaction is dimethylallyl diphosphate + 2 oxidized [2Fe-2S]-[ferredoxin] + H2O = (2E)-4-hydroxy-3-methylbut-2-enyl diphosphate + 2 reduced [2Fe-2S]-[ferredoxin] + 2 H(+). Its pathway is isoprenoid biosynthesis; dimethylallyl diphosphate biosynthesis; dimethylallyl diphosphate from (2E)-4-hydroxy-3-methylbutenyl diphosphate: step 1/1. It functions in the pathway isoprenoid biosynthesis; isopentenyl diphosphate biosynthesis via DXP pathway; isopentenyl diphosphate from 1-deoxy-D-xylulose 5-phosphate: step 6/6. In terms of biological role, catalyzes the conversion of 1-hydroxy-2-methyl-2-(E)-butenyl 4-diphosphate (HMBPP) into a mixture of isopentenyl diphosphate (IPP) and dimethylallyl diphosphate (DMAPP). Acts in the terminal step of the DOXP/MEP pathway for isoprenoid precursor biosynthesis. This is 4-hydroxy-3-methylbut-2-enyl diphosphate reductase from Anaplasma marginale (strain St. Maries).